Reading from the N-terminus, the 117-residue chain is DNA-directed RNA polymerase subunit omega (117 aa).

Belongs to the RNA polymerase subunit omega family. The RNAP catalytic core consists of 2 alpha, 1 beta, 1 beta' and 1 omega subunit. When a sigma factor is associated with the core the holoenzyme is formed, which can initiate transcription.

The enzyme catalyses RNA(n) + a ribonucleoside 5'-triphosphate = RNA(n+1) + diphosphate. Functionally, promotes RNA polymerase assembly. Latches the N- and C-terminal regions of the beta' subunit thereby facilitating its interaction with the beta and alpha subunits. This chain is DNA-directed RNA polymerase subunit omega, found in Cereibacter sphaeroides (strain ATCC 17029 / ATH 2.4.9) (Rhodobacter sphaeroides).